The sequence spans 177 residues: Thymidine kinase (177 aa).

ATP is bound at residue 11 to 18 (GPMFSGKS). Glu-83 serves as the catalytic Proton acceptor. Phe-113 contributes to the substrate binding site. Residues Cys-138 and Cys-141 each coordinate Zn(2+). 157–161 (IEIIG) serves as a coordination point for substrate. The Zn(2+) site is built by Cys-170 and Cys-173.

This sequence belongs to the thymidine kinase family. In terms of assembly, homotetramer. Two molecules of substrate bind to each enzyme tetramer.

The enzyme catalyses thymidine + ATP = dTMP + ADP + H(+). Its function is as follows. Phosphorylates thymidine and thymidine analogs, such as azidothymidine (AZT). Part of the salvage pathway for pyrimidine deoxyribonucleotide synthesis. The polypeptide is Thymidine kinase (OPG101) (Homo sapiens (Human)).